Consider the following 3083-residue polypeptide: Laminin subunit alpha-1 (3083 aa).

An N-terminal signal peptide occupies residues 1-24; the sequence is MRGSGTGAALLVLLASVLWVTVRS. The residue at position 25 (Gln25) is a Pyrrolidone carboxylic acid. The Laminin N-terminal domain maps to 25–276; that stretch reads QQRGLFPAIL…SIKDISVGGM (252 aa). 6 disulfide bridges follow: Cys277/Cys286, Cys279/Cys297, Cys299/Cys308, Cys311/Cys331, Cys334/Cys343, and Cys336/Cys368. 4 Laminin EGF-like domains span residues 277 to 333, 334 to 403, 404 to 460, and 461 to 509; these read CICY…ECEE, CNCH…PCRP, CNCD…NCIP, and CDCR…GCSE. An N-linked (GlcNAc...) asparagine glycan is attached at Asn370. 10 cysteine pairs are disulfide-bonded: Cys371-Cys380, Cys383-Cys401, Cys404-Cys416, Cys406-Cys434, Cys436-Cys445, Cys448-Cys458, Cys461-Cys474, Cys463-Cys478, Cys480-Cys489, and Cys492-Cys507. A Laminin EGF-like 5; first part domain is found at 510 to 519; the sequence is CFCFGVSGVC. In terms of domain architecture, Laminin IV type A 1 spans 523 to 715; sequence TWSISQVTNM…DLAVAADVEH (193 aa). Residue Asn672 is glycosylated (N-linked (GlcNAc...) asparagine). Residues 716–748 enclose the Laminin EGF-like 5; second part domain; sequence CECPQGYTGTSCEACLPGYYRVDGILFGGICQP. 32 cysteine pairs are disulfide-bonded: Cys749/Cys758, Cys751/Cys764, Cys767/Cys776, Cys779/Cys795, Cys798/Cys813, Cys800/Cys823, Cys826/Cys835, Cys838/Cys853, Cys856/Cys870, Cys858/Cys877, Cys880/Cys889, Cys892/Cys906, Cys909/Cys921, Cys911/Cys928, Cys930/Cys939, Cys942/Cys955, Cys958/Cys970, Cys960/Cys976, Cys978/Cys987, Cys990/Cys1002, Cys1005/Cys1014, Cys1007/Cys1021, Cys1023/Cys1032, Cys1035/Cys1048, Cys1051/Cys1063, Cys1053/Cys1070, Cys1072/Cys1081, Cys1084/Cys1094, Cys1097/Cys1109, Cys1099/Cys1125, Cys1127/Cys1136, and Cys1139/Cys1154. 8 consecutive Laminin EGF-like domains span residues 749–797, 798–855, 856–908, 909–957, 958–1004, 1005–1050, 1051–1096, and 1097–1156; these read CECH…DCQP, CACP…TCVP, CNCS…NCRA, CDCH…GCVP, CNCS…GCTP, CDCA…GCQA, CNCS…DCVP, and CGCD…GCSP. The Cell attachment site signature appears at 1147–1149; the sequence is RGD. The 10-residue stretch at 1157–1166 folds into the Laminin EGF-like 14; first part domain; sequence CFCFGLSQLC. The region spanning 1177–1368 is the Laminin IV type A 2 domain; it reads ITLASDQPLL…EGEAALLLEL (192 aa). Asn1344 carries N-linked (GlcNAc...) asparagine glycosylation. The 41-residue stretch at 1369 to 1409 folds into the Laminin EGF-like 14; second part domain; the sequence is CVCPPGTAGHSCQDCAPGYYREKLPESGGRGPRPLLAPCVP. Intrachain disulfides connect Cys1410–Cys1419, Cys1412–Cys1426, Cys1429–Cys1438, Cys1441–Cys1456, Cys1459–Cys1473, Cys1461–Cys1483, Cys1486–Cys1495, Cys1498–Cys1513, Cys1516–Cys1528, Cys1518–Cys1535, Cys1537–Cys1546, and Cys1549–Cys1560. Laminin EGF-like domains lie at 1410–1458, 1459–1515, and 1516–1562; these read CNCN…DCTP, CTCP…SCQT, and CDCN…DCVS. The tract at residues 1564-2123 is domain II and I; the sequence is DDDCVGPLLN…SRARKQVASI (560 aa). Residues 1617–1691 are a coiled coil; the sequence is AKKIRAEIQL…VATLNQTARK (75 aa). N-linked (GlcNAc...) asparagine glycosylation is found at Asn1659, Asn1686, Asn1718, Asn1725, Asn1763, and Asn1811. Positions 1723 to 1809 form a coiled coil; the sequence is QQNATLELKA…QEKKLRVQEE (87 aa). Residues 1868-1901 are a coiled coil; the sequence is KRRARDLVHRAEQHASELQSRAGALDRDLENVRN. N-linked (GlcNAc...) asparagine glycosylation is found at Asn1935, Asn2026, Asn2045, and Asn2066. 5 Laminin G-like domains span residues 2124–2304, 2312–2488, 2493–2679, 2721–2893, and 2898–3078; these read KVAV…CNGC, DSSF…RKGC, IQSV…LDTC, AHQF…VDRC, and QEGT…PHSC. The cysteines at positions 2278 and 2304 are disulfide-linked. Asn2355 carries an N-linked (GlcNAc...) asparagine glycan. Disulfide bonds link Cys2464-Cys2488 and Cys2652-Cys2679. Residue Asn2834 is glycosylated (N-linked (GlcNAc...) asparagine). A disulfide bridge connects residues Cys2868 and Cys2893. N-linked (GlcNAc...) asparagine glycosylation occurs at Asn2923. Cys3047 and Cys3078 are joined by a disulfide.

As to quaternary structure, laminin is a complex glycoprotein, consisting of three different polypeptide chains (alpha, beta, gamma), which are bound to each other by disulfide bonds into a cross-shaped molecule comprising one long and three short arms with globules at each end. Alpha-1 is a subunit of laminin-1 (laminin-111 or EHS laminin) and laminin-3 (laminin-121 or S-laminin). Tyrosine phosphorylated by PKDCC/VLK.

It localises to the secreted. It is found in the extracellular space. The protein resides in the extracellular matrix. The protein localises to the basement membrane. Functionally, binding to cells via a high affinity receptor, laminin is thought to mediate the attachment, migration and organization of cells into tissues during embryonic development by interacting with other extracellular matrix components. The chain is Laminin subunit alpha-1 (Lama1) from Mus musculus (Mouse).